Here is a 256-residue protein sequence, read N- to C-terminus: uncharacterized protein (256 aa).

An HTH deoR-type domain is found at 7–62; it reads PAERQKTLLNLISKQSVISINNLVNILGVSHMTVRRDIQKLEEDGKVISVSGGVQL. Positions 24–43 form a DNA-binding region, H-T-H motif; it reads ISINNLVNILGVSHMTVRRD.

This is an uncharacterized protein from Haemophilus influenzae (strain ATCC 51907 / DSM 11121 / KW20 / Rd).